The following is a 77-amino-acid chain: MERMLLKKLYALDDIQVGIFEVESKIQYYIAVLIDGLNFEVWGKGKTPYEAIINASEKWSNSFGGFNPFREALRLRW.

This is an uncharacterized protein from Acidianus hospitalis (AFV-1).